The following is a 430-amino-acid chain: Adenylosuccinate synthetase (430 aa).

GTP-binding positions include 11–17 (GDEGKGK) and 39–41 (GHS). Asp12 (proton acceptor) is an active-site residue. The Mg(2+) site is built by Asp12 and Gly39. Residues 12–15 (DEGK), 37–40 (NAGH), Thr129, Arg143, Asn221, Thr236, and Arg300 each bind IMP. His40 (proton donor) is an active-site residue. Residue 296–302 (VSTGRKR) participates in substrate binding. GTP-binding positions include Arg302, 328–330 (KLD), and 412–414 (GTG).

It belongs to the adenylosuccinate synthetase family. Homodimer. The cofactor is Mg(2+).

It localises to the cytoplasm. It catalyses the reaction IMP + L-aspartate + GTP = N(6)-(1,2-dicarboxyethyl)-AMP + GDP + phosphate + 2 H(+). It participates in purine metabolism; AMP biosynthesis via de novo pathway; AMP from IMP: step 1/2. In terms of biological role, plays an important role in the de novo pathway and in the salvage pathway of purine nucleotide biosynthesis. Catalyzes the first committed step in the biosynthesis of AMP from IMP. The protein is Adenylosuccinate synthetase of Neurospora crassa (strain ATCC 24698 / 74-OR23-1A / CBS 708.71 / DSM 1257 / FGSC 987).